Consider the following 432-residue polypeptide: Adenylosuccinate synthetase (432 aa).

GTP-binding positions include 12–18 and 40–42; these read GDEGKGK and GHT. Asp-13 (proton acceptor) is an active-site residue. Positions 13 and 40 each coordinate Mg(2+). Residues 13-16, 38-41, Thr-132, Arg-146, Gln-226, Thr-241, and Arg-305 contribute to the IMP site; these read DEGK and NAGH. The active-site Proton donor is the His-41. 301–307 is a substrate binding site; the sequence is TVTGRKR. GTP contacts are provided by residues Arg-307, 333-335, and 415-417; these read KLD and STS.

The protein belongs to the adenylosuccinate synthetase family. Homodimer. Mg(2+) is required as a cofactor.

Its subcellular location is the cytoplasm. The catalysed reaction is IMP + L-aspartate + GTP = N(6)-(1,2-dicarboxyethyl)-AMP + GDP + phosphate + 2 H(+). Its pathway is purine metabolism; AMP biosynthesis via de novo pathway; AMP from IMP: step 1/2. In terms of biological role, plays an important role in the de novo pathway of purine nucleotide biosynthesis. Catalyzes the first committed step in the biosynthesis of AMP from IMP. This Sinorhizobium medicae (strain WSM419) (Ensifer medicae) protein is Adenylosuccinate synthetase.